Consider the following 239-residue polypeptide: Tubulin beta-3 chain (239 aa).

Asn-22 contributes to the GTP binding site. Positions 207–239 (EESNMNDLVSEYQQYQDASAEPXXEQEEDYEEA) are disordered. The segment covering 230–239 (XEQEEDYEEA) has biased composition (acidic residues).

This sequence belongs to the tubulin family. In terms of assembly, dimer of alpha and beta chains. A typical microtubule is a hollow water-filled tube with an outer diameter of 25 nm and an inner diameter of 15 nM. Alpha-beta heterodimers associate head-to-tail to form protofilaments running lengthwise along the microtubule wall with the beta-tubulin subunit facing the microtubule plus end conferring a structural polarity. Microtubules usually have 13 protofilaments but different protofilament numbers can be found in some organisms and specialized cells. It depends on Mg(2+) as a cofactor.

It is found in the cytoplasm. Its subcellular location is the cytoskeleton. Functionally, tubulin is the major constituent of microtubules, a cylinder consisting of laterally associated linear protofilaments composed of alpha- and beta-tubulin heterodimers. Microtubules grow by the addition of GTP-tubulin dimers to the microtubule end, where a stabilizing cap forms. Below the cap, tubulin dimers are in GDP-bound state, owing to GTPase activity of alpha-tubulin. The sequence is that of Tubulin beta-3 chain (TUBB3) from Anemia phyllitidis (Fern).